We begin with the raw amino-acid sequence, 142 residues long: Acidic phospholipase A2 KBf-grIB (142 aa).

Disulfide bonds link cysteine 28–cysteine 94, cysteine 44–cysteine 141, cysteine 46–cysteine 62, cysteine 61–cysteine 122, cysteine 68–cysteine 115, cysteine 78–cysteine 108, and cysteine 101–cysteine 113. Residues tyrosine 45, glycine 47, and glycine 49 each coordinate Ca(2+). The active site involves histidine 65. Aspartate 66 is a binding site for Ca(2+). Residue aspartate 116 is part of the active site.

It belongs to the phospholipase A2 family. Group I subfamily. D49 sub-subfamily. Requires Ca(2+) as cofactor. As to expression, expressed by the venom gland.

The protein resides in the secreted. It catalyses the reaction a 1,2-diacyl-sn-glycero-3-phosphocholine + H2O = a 1-acyl-sn-glycero-3-phosphocholine + a fatty acid + H(+). In terms of biological role, PLA2 catalyzes the calcium-dependent hydrolysis of the 2-acyl groups in 3-sn-phosphoglycerides. The sequence is that of Acidic phospholipase A2 KBf-grIB from Bungarus fasciatus (Banded krait).